The chain runs to 401 residues: Tyrosine--tRNA ligase (401 aa).

The 'HIGH' region motif lies at 43 to 52 (PTAPDLHLGH). The 'KMSKS' region motif lies at 227 to 231 (KMSKS). K230 provides a ligand contact to ATP. Residues 338 to 399 (MAIGNVLKEA…GKRRFAKINL (62 aa)) form the S4 RNA-binding domain.

This sequence belongs to the class-I aminoacyl-tRNA synthetase family. TyrS type 2 subfamily. As to quaternary structure, homodimer.

It localises to the cytoplasm. It catalyses the reaction tRNA(Tyr) + L-tyrosine + ATP = L-tyrosyl-tRNA(Tyr) + AMP + diphosphate + H(+). Its function is as follows. Catalyzes the attachment of tyrosine to tRNA(Tyr) in a two-step reaction: tyrosine is first activated by ATP to form Tyr-AMP and then transferred to the acceptor end of tRNA(Tyr). The chain is Tyrosine--tRNA ligase from Idiomarina loihiensis (strain ATCC BAA-735 / DSM 15497 / L2-TR).